We begin with the raw amino-acid sequence, 180 residues long: Large ribosomal subunit protein uL6 (180 aa).

Belongs to the universal ribosomal protein uL6 family. In terms of assembly, part of the 50S ribosomal subunit.

Its function is as follows. This protein binds to the 23S rRNA, and is important in its secondary structure. It is located near the subunit interface in the base of the L7/L12 stalk, and near the tRNA binding site of the peptidyltransferase center. The protein is Large ribosomal subunit protein uL6 of Protochlamydia amoebophila (strain UWE25).